Here is a 407-residue protein sequence, read N- to C-terminus: 1-deoxy-D-xylulose 5-phosphate reductoisomerase (407 aa).

Threonine 22, glycine 23, serine 24, isoleucine 25, glycine 48, asparagine 51, and asparagine 128 together coordinate NADPH. Residue lysine 129 participates in 1-deoxy-D-xylulose 5-phosphate binding. Glutamate 130 contributes to the NADPH binding site. Aspartate 152 lines the Mn(2+) pocket. Residues serine 153, glutamate 154, serine 178, and histidine 201 each contribute to the 1-deoxy-D-xylulose 5-phosphate site. A Mn(2+)-binding site is contributed by glutamate 154. An NADPH-binding site is contributed by glycine 207. 1-deoxy-D-xylulose 5-phosphate is bound by residues serine 214, asparagine 219, lysine 220, and glutamate 223. Residue glutamate 223 coordinates Mn(2+).

The protein belongs to the DXR family. Mg(2+) serves as cofactor. It depends on Mn(2+) as a cofactor.

The enzyme catalyses 2-C-methyl-D-erythritol 4-phosphate + NADP(+) = 1-deoxy-D-xylulose 5-phosphate + NADPH + H(+). The protein operates within isoprenoid biosynthesis; isopentenyl diphosphate biosynthesis via DXP pathway; isopentenyl diphosphate from 1-deoxy-D-xylulose 5-phosphate: step 1/6. Its function is as follows. Catalyzes the NADPH-dependent rearrangement and reduction of 1-deoxy-D-xylulose-5-phosphate (DXP) to 2-C-methyl-D-erythritol 4-phosphate (MEP). The protein is 1-deoxy-D-xylulose 5-phosphate reductoisomerase of Mycobacterium avium (strain 104).